The following is a 572-amino-acid chain: Dihydroxy-acid dehydratase (572 aa).

[2Fe-2S] cluster is bound at residue Cys-57. Asp-89 lines the Mg(2+) pocket. Cys-130 provides a ligand contact to [2Fe-2S] cluster. Asp-131 and Lys-132 together coordinate Mg(2+). Position 132 is an N6-carboxylysine (Lys-132). Residue Cys-202 coordinates [2Fe-2S] cluster. Residue Glu-453 participates in Mg(2+) binding. Ser-479 functions as the Proton acceptor in the catalytic mechanism.

The protein belongs to the IlvD/Edd family. Homodimer. The cofactor is [2Fe-2S] cluster. Requires Mg(2+) as cofactor.

It catalyses the reaction (2R)-2,3-dihydroxy-3-methylbutanoate = 3-methyl-2-oxobutanoate + H2O. The enzyme catalyses (2R,3R)-2,3-dihydroxy-3-methylpentanoate = (S)-3-methyl-2-oxopentanoate + H2O. Its pathway is amino-acid biosynthesis; L-isoleucine biosynthesis; L-isoleucine from 2-oxobutanoate: step 3/4. It functions in the pathway amino-acid biosynthesis; L-valine biosynthesis; L-valine from pyruvate: step 3/4. Its function is as follows. Functions in the biosynthesis of branched-chain amino acids. Catalyzes the dehydration of (2R,3R)-2,3-dihydroxy-3-methylpentanoate (2,3-dihydroxy-3-methylvalerate) into 2-oxo-3-methylpentanoate (2-oxo-3-methylvalerate) and of (2R)-2,3-dihydroxy-3-methylbutanoate (2,3-dihydroxyisovalerate) into 2-oxo-3-methylbutanoate (2-oxoisovalerate), the penultimate precursor to L-isoleucine and L-valine, respectively. The polypeptide is Dihydroxy-acid dehydratase (Streptococcus thermophilus (strain CNRZ 1066)).